A 646-amino-acid polypeptide reads, in one-letter code: Lamin-1 (646 aa).

The interval 1–85 is head; it reads MAEKAGEAGV…GSRATSPTSF (85 aa). Residues 1–94 are disordered; that stretch reads MAEKAGEAGV…FSRAQEKEEL (94 aa). 2 stretches are compositionally biased toward polar residues: residues 48 to 67 and 75 to 87; these read ATPS…SMSL and QGSR…SFSR. Residues 86–126 form a coil 1A region; sequence SRAQEKEELQNLNDRLAKILNKLNDSEEENRTLKIRLTTVQ. An IF rod domain is found at 90–446; the sequence is EKEELQNLND…KLLSDEEIRL (357 aa). Residues 127 to 137 are linker 1; that stretch reads QETSADLNDQI. Residues 138–281 form a coil 1B region; sequence GKYRDELERA…SKLQRQSLSV (144 aa). A compositionally biased stretch (polar residues) spans 281–301; that stretch reads VTTVDHHSAQSTSRRSGSDFS. Residues 281-304 are disordered; it reads VTTVDHHSAQSTSRRSGSDFSASV. The linker 2 stretch occupies residues 282–299; sequence TTVDHHSAQSTSRRSGSD. A coil 2 region spans residues 300 to 439; the sequence is FSASVEDMRS…TELEMYNKLL (140 aa). The tail stretch occupies residues 440–646; it reads SDEEIRLGIT…GKGILGFFGL (207 aa). The Nuclear localization signal signature appears at 457 to 471; the sequence is VRHGAKKRKLTETFY. Low complexity predominate over residues 476-487; it reads GSRSSAGSRSAG. The disordered stretch occupies residues 476-513; that stretch reads GSRSSAGSRSAGHNSTPVTKSQVTRTTVKTSENKSKAS. Over residues 488–505 the composition is skewed to polar residues; it reads HNSTPVTKSQVTRTTVKT. The 115-residue stretch at 504–618 folds into the LTD domain; that stretch reads KTSENKSKAS…NQMATYEVSA (115 aa).

It belongs to the intermediate filament family.

Its subcellular location is the nucleus. Its function is as follows. Intermediate filament (IF) protein, component of the nuclear lamina, a fibrous layer on the nucleoplasmic side of the inner nuclear membrane, which is thought to provide a framework for the nuclear envelope. This chain is Lamin-1, found in Hypsibius exemplaris (Freshwater tardigrade).